The sequence spans 231 residues: Small ribosomal subunit protein uS5 (231 aa).

Residues 1–63 (MADLENKTVK…KSVDRANKVK (63 aa)) are disordered. The segment covering 29-60 (KRTESGAKKQIWEKRSAHDSKDMPKKSVDRAN) has biased composition (basic and acidic residues). Residues 75 to 138 (FSEKVVNISR…KDARNHLISV (64 aa)) enclose the S5 DRBM domain.

It belongs to the universal ribosomal protein uS5 family. As to quaternary structure, part of the 30S ribosomal subunit. Contacts proteins S4 and S8.

In terms of biological role, with S4 and S12 plays an important role in translational accuracy. Functionally, located at the back of the 30S subunit body where it stabilizes the conformation of the head with respect to the body. The polypeptide is Small ribosomal subunit protein uS5 (Mycoplasmopsis agalactiae (strain NCTC 10123 / CIP 59.7 / PG2) (Mycoplasma agalactiae)).